We begin with the raw amino-acid sequence, 230 residues long: Probable phosphatase IndB (230 aa).

Asp8 (nucleophile) is an active-site residue. Asp8, Asp10, and Asp169 together coordinate Mg(2+). Asp10 functions as the Proton donor in the catalytic mechanism.

The protein belongs to the HAD-like hydrolase superfamily. It depends on Mg(2+) as a cofactor.

In terms of biological role, part of an operon that could be involved in the biosynthesis of the blue pigment indigoidine, which is implicated in pathogenicity and protection from oxidative stress. This chain is Probable phosphatase IndB, found in Dickeya dadantii (strain 3937) (Erwinia chrysanthemi (strain 3937)).